The chain runs to 1196 residues: MDEEMRHSLECIQANQIFPRKQLIREDENLQVPFLELHGESTEYVGRAEEAIIALSNYRLHIKFKESLVNVPLQLIESVECRDIFQLHLTCKDCKVIRCQFPTFEQCQDWLKRLNNAIRPPGKIEDLFSFAYHAWCMEVYASEKEQHGDLCRPGEHVTSRFKNEVERMGFDMNNAWRISNINEKYKLCGSYPQELIVPAWITDKELESVAGFRSWKRIPAVIYRHQSNGAVIARCGQPEVSWWGWRNADDEHLVQSVARACASDSQSSISKVSTRNSCRDFPNAGDLSDVEFDSSLSNTSGAESLALQPQKLLILDARSYAAAVANRAKGGGCECPEYYPNCEVVFMGMANIHSIRRSFQSLRLLCTQMPDPGNWLSALESTKWLHHLSVLLKSALLVVHAVDRDQRPVLVHCSDGWDRTPQIVALAKLLLDPYYRTIEGFQVLVEMEWLDFGHKFADRCGHGEDSDDLNERCPVFLQWLDCVHQLQRQFPCSFEFNEAFLVKLVQHTYSCLFGTFLCNNAKERGEKQTQERTCSVWSLLRAGNKAFKNLLYSSQSEAVLYPVCHVRNLMLWSAVYLPCPSPSTPTDDSCAPYPVPGTSPDEPPLSRLPKTRSFDNLTTTCENMVPLASRRSSDPSLNEKWQEHGRSLELSSFASAGEEVPAMDSLRKPSRLLGGAELSVAAGVAEGQMENILQEATKEESGVEEPTHRGHTEVPEVKEEAPLAKESSMAAEGPVVLYQEPQLDDATLRSHQGPSLSLFSQGIPEHQDGHNVLSSSLQAPLRGEDSQEVPVEQPQVENIAEDRENVAPAVPVDAKVGLGISQSSSLLPSQVPFETRGPHINNSVHMLLEDKVKSESGPQLHHRPCPASSGRFSGKDMLPVAPEPRSAERPQWDSVLHRTSSPGNTLSLLQAPCALPLDKCRQGIVCNGALETENKASEQPAGFDTLQKYPTPNGHCANWEAGRSKDSLSHQLSATSCSSAHLYSRNLHHKWLNSHSGRPSTTSSPDQPSRSHLDDDGMPVYTDTIQQRLRQIESGHQQEVETLKKQVQELKSRLESQYLTSSLRFNGDFGDEVTSIPDSESNLDQNCVSRCSTEIFSEASWEQVDKQDTEMTRWLPDHLAAHCYACDSAFWLASRKHHCRNCGNVFCSSCCNQKVPVPSQQLFEPSRVCKSCYSSLHPTSSSIDLELDKPIAATSN.

Residue Ser-8 is modified to Phosphoserine. Residues 155–576 (EHVTSRFKNE…RNLMLWSAVY (422 aa)) form the Myotubularin phosphatase domain. A 1,2-diacyl-sn-glycero-3-phospho-(1D-myo-inositol-3,5-bisphosphate)-binding residues include Asn-326, Asn-351, and Ile-352. The a 1,2-diacyl-sn-glycero-3-phospho-(1D-myo-inositol-3-phosphate) site is built by Asn-326, Asn-351, and Ile-352. Catalysis depends on Cys-413, which acts as the Phosphocysteine intermediate. 8 residues coordinate a 1,2-diacyl-sn-glycero-3-phospho-(1D-myo-inositol-3,5-bisphosphate): Ser-414, Asp-415, Gly-416, Trp-417, Asp-418, Arg-419, Lys-455, and Arg-459. 6 residues coordinate a 1,2-diacyl-sn-glycero-3-phospho-(1D-myo-inositol-3-phosphate): Ser-414, Asp-415, Gly-416, Trp-417, Asp-418, and Arg-419. Arg-459 is an a 1,2-diacyl-sn-glycero-3-phospho-(1D-myo-inositol-3-phosphate) binding site. The disordered stretch occupies residues 587–612 (DDSCAPYPVPGTSPDEPPLSRLPKTR). Residues 593-603 (YPVPGTSPDEP) are compositionally biased toward pro residues. Ser-613, Ser-633, Ser-647, and Ser-651 each carry phosphoserine. Disordered stretches follow at residues 697–719 (TKEESGVEEPTHRGHTEVPEVKE) and 855–900 (ESGP…HRTS). Residue Ser-907 is modified to Phosphoserine. Over residues 993–1008 (NSHSGRPSTTSSPDQP) the composition is skewed to polar residues. The tract at residues 993–1019 (NSHSGRPSTTSSPDQPSRSHLDDDGMP) is disordered. Residues 1027-1060 (QRLRQIESGHQQEVETLKKQVQELKSRLESQYLT) are a coiled coil. The residue at position 1062 (Ser-1062) is a Phosphoserine. An FYVE-type zinc finger spans residues 1117–1177 (DHLAAHCYAC…VCKSCYSSLH (61 aa)). Positions 1123, 1126, 1139, 1142, 1147, 1150, 1169, and 1172 each coordinate Zn(2+).

The protein belongs to the protein-tyrosine phosphatase family. Non-receptor class myotubularin subfamily. In terms of assembly, forms heterodimers with MTMR4 that recruit both CEP55 and PLK1; occurs during early mitosis, regulates the phosphorylation of CEP55 by PLK1 and its recruitment to the midbody where it mediates cell abscission.

The protein resides in the cytoplasm. It is found in the cytosol. It localises to the membrane. The enzyme catalyses a 1,2-diacyl-sn-glycero-3-phospho-(1D-myo-inositol-3,5-bisphosphate) + H2O = a 1,2-diacyl-sn-glycero-3-phospho-(1D-myo-inositol-5-phosphate) + phosphate. It carries out the reaction a 1,2-diacyl-sn-glycero-3-phospho-(1D-myo-inositol-3-phosphate) + H2O = a 1,2-diacyl-sn-glycero-3-phospho-(1D-myo-inositol) + phosphate. It catalyses the reaction 1,2-dihexadecanoyl-sn-glycero-3-phospho-(1D-myo-inositol-3-phosphate) + H2O = 1,2-dihexadecanoyl-sn-glycero-3-phospho-(1D-myo-inositol) + phosphate. The catalysed reaction is 1,2-dioctanoyl-sn-glycero-3-phospho-(1-D-myo-inositol-3-phosphate) + H2O = 1,2-dioctanoyl-sn-glycero-3-phospho-(1D-myo-inositol) + phosphate. The enzyme catalyses 1,2-dihexadecanoyl-sn-glycero-3-phospho-(1D-myo-inositol-3,5-phosphate) + H2O = 1,2-dihexadecanoyl-sn-glycero-3-phospho-(1D-myo-inositol-5-phosphate) + phosphate. Its function is as follows. Lipid phosphatase that specifically dephosphorylates the D-3 position of phosphatidylinositol 3-phosphate and phosphatidylinositol 3,5-bisphosphate, generating phosphatidylinositol and phosphatidylinositol 5-phosphate. Decreases the levels of phosphatidylinositol 3-phosphate, a phospholipid found in cell membranes where it acts as key regulator of both cell signaling and intracellular membrane traffic. Could also have a molecular sequestering/adapter activity and regulate biological processes independently of its phosphatase activity. It includes the regulation of midbody abscission during mitotic cytokinesis. The chain is Phosphatidylinositol-3,5-bisphosphate 3-phosphatase MTMR3 from Mus musculus (Mouse).